A 261-amino-acid polypeptide reads, in one-letter code: Carnitinyl-CoA dehydratase (261 aa).

Residue Glu-111 is the Nucleophile of the active site. Glu-131 serves as the catalytic Proton acceptor.

It belongs to the enoyl-CoA hydratase/isomerase family.

The enzyme catalyses (R)-carnitinyl-CoA = crotonobetainyl-CoA + H2O. It functions in the pathway amine and polyamine metabolism; carnitine metabolism. Its function is as follows. Catalyzes the reversible dehydration of L-carnitinyl-CoA to crotonobetainyl-CoA. The protein is Carnitinyl-CoA dehydratase of Escherichia coli (strain SMS-3-5 / SECEC).